Reading from the N-terminus, the 363-residue chain is Early boundary activity protein 1 (363 aa).

Positions 155–168 are enriched in basic and acidic residues; the sequence is MDQEPEHKQSHEQD. A disordered region spans residues 155–242; the sequence is MDQEPEHKQS…NAKRRCPGFE (88 aa). The segment covering 198–209 has biased composition (acidic residues); that stretch reads EDLGLDDDDEDY. The region spanning 255–354 is the BEN domain; sequence GPNGTEVSRI…TKCADENKML (100 aa).

In terms of assembly, the heterotrimeric Elba complex consists of Elba1, Elba2 and Elba3.

It is found in the nucleus. The heterotrimeric Elba complex is required for chromatin domain boundary function during early embryogenesis. It binds to a 8-bp sequence 5'-CCAATAAG-3' in the Fab-7 insulator or boundary element in the bithorax complex and contributes to its insulator or boundary activity. Elba1 may act as a transcriptional repressor and binds the palindromic sequence 5'-CCAATTGG-3' to mediate transcriptional repression. This is Early boundary activity protein 1 from Drosophila melanogaster (Fruit fly).